Here is a 362-residue protein sequence, read N- to C-terminus: Phospho-N-acetylmuramoyl-pentapeptide-transferase (362 aa).

The next 10 membrane-spanning stretches (helical) occupy residues V27–W47, T73–L93, Y97–W117, W132–A152, L160–L180, G200–A220, A237–F257, V264–V284, I289–V309, and Q339–L359.

It belongs to the glycosyltransferase 4 family. MraY subfamily. Mg(2+) is required as a cofactor.

It localises to the cell inner membrane. The catalysed reaction is UDP-N-acetyl-alpha-D-muramoyl-L-alanyl-gamma-D-glutamyl-meso-2,6-diaminopimeloyl-D-alanyl-D-alanine + di-trans,octa-cis-undecaprenyl phosphate = di-trans,octa-cis-undecaprenyl diphospho-N-acetyl-alpha-D-muramoyl-L-alanyl-D-glutamyl-meso-2,6-diaminopimeloyl-D-alanyl-D-alanine + UMP. The protein operates within cell wall biogenesis; peptidoglycan biosynthesis. Its function is as follows. Catalyzes the initial step of the lipid cycle reactions in the biosynthesis of the cell wall peptidoglycan: transfers peptidoglycan precursor phospho-MurNAc-pentapeptide from UDP-MurNAc-pentapeptide onto the lipid carrier undecaprenyl phosphate, yielding undecaprenyl-pyrophosphoryl-MurNAc-pentapeptide, known as lipid I. The chain is Phospho-N-acetylmuramoyl-pentapeptide-transferase from Aromatoleum aromaticum (strain DSM 19018 / LMG 30748 / EbN1) (Azoarcus sp. (strain EbN1)).